The primary structure comprises 260 residues: Pro-thyrotropin-releasing hormone (260 aa).

The N-terminal stretch at 1 to 24 (MPSIQLPVLLLCLTLSGVCLNGRQ) is a signal peptide. The disordered stretch occupies residues 72-112 (PQWLSKRQHPGKRYISDPEKRQHPGKRDVEEKASFGDIQKR). Residue glutamine 79 is modified to Pyrrolidone carboxylic acid. Proline amide is present on proline 81. The segment covering 85–112 (YISDPEKRQHPGKRDVEEKASFGDIQKR) has biased composition (basic and acidic residues). The residue at position 93 (glutamine 93) is a Pyrrolidone carboxylic acid. Proline 95 carries the proline amide modification. At glutamine 113 the chain carries Pyrrolidone carboxylic acid. Leucine amide is present on leucine 115. Glutamine 134 bears the Pyrrolidone carboxylic acid mark. Proline 136 bears the Proline amide mark. Residue glutamine 163 is modified to Pyrrolidone carboxylic acid. A Proline amide modification is found at proline 165. Residues 195–207 (KHQQFGNRDRDSD) are compositionally biased toward basic and acidic residues. Disordered regions lie at residues 195 to 217 (KHQQ…PCDL) and 238 to 260 (KEGV…ETEE). Pyrrolidone carboxylic acid is present on glutamine 246. Position 248 is a proline amide (proline 248).

The protein belongs to the TRH family.

It is found in the secreted. Functionally, functions as a regulator of the biosynthesis of TSH in the anterior pituitary gland and as a neurotransmitter/ neuromodulator in the central and peripheral nervous systems. This is Pro-thyrotropin-releasing hormone (TRH) from Gallus gallus (Chicken).